The sequence spans 376 residues: Phytanoyl-CoA hydroxylase-interacting protein-like (376 aa).

Residues 52-161 (VPHNIKISNI…EIIEFCTADY (110 aa)) enclose the Fibronectin type-III domain.

The protein belongs to the PHYHIP family.

Functionally, may play a role in the development of the central system. The polypeptide is Phytanoyl-CoA hydroxylase-interacting protein-like (phyhipl) (Xenopus laevis (African clawed frog)).